The following is an 860-amino-acid chain: Protein argonaute-3 (860 aa).

Met-1 bears the N-acetylmethionine mark. In terms of domain architecture, PAZ spans 230–349 (PVIQFMCEVL…LPLEVCNIVA (120 aa)). The 302-residue stretch at 518–819 (LIIVILPGKT…VAFRARYHLV (302 aa)) folds into the Piwi domain. The interval 530–567 (YAEVKRVGDTLLGMATQCVQVKNVIKTSPQTLSNLCLK) is interaction with guide RNA. A divalent metal cation is bound by residues Asp-598, Glu-638, and Asp-670. The interval 758–805 (QGTSRPSHYHVLWDDNFFTADELQLLTYQLCHTYVRCTRSVSIPAPAY) is interaction with guide RNA. His-808 serves as a coordination point for a divalent metal cation. Position 825 is a phosphoserine (Ser-825).

The protein belongs to the argonaute family. Ago subfamily. As to quaternary structure, interacts with EIF4B, IMP8, PRMT5 and TNRC6B. Interacts with APOBEC3F, APOBEC3G and APOBEC3H. Interacts with EDC4. Ubiquitinated on surface-exposed lysines by a SCF-like E3 ubiquitin-protein ligase complex containing ZSWIM8 during target-directed microRNA degradation (TDMD), a process that mediates degradation of microRNAs (miRNAs). Ubiquitination by the SCF-like E3 ubiquitin-protein ligase complex containing ZSWIM8 leads to its subsequent degradation, thereby exposing miRNAs for degradation. ZSWIM8 recognizes and binds AGO3 when it is engaged with a TDMD target.

The protein localises to the cytoplasm. It localises to the P-body. It carries out the reaction Endonucleolytic cleavage to 5'-phosphomonoester.. Functionally, required for RNA-mediated gene silencing (RNAi). Binds to short RNAs such as microRNAs (miRNAs) and represses the translation of mRNAs which are complementary to them. Proposed to be involved in stabilization of small RNA derivates (siRNA) derived from processed RNA polymerase III-transcribed Alu repeats containing a DR2 retinoic acid response element (RARE) in stem cells and in the subsequent siRNA-dependent degradation of a subset of RNA polymerase II-transcribed coding mRNAs by recruiting a mRNA decapping complex involving EDC4. Possesses RNA slicer activity but only on select RNAs bearing 5'- and 3'-flanking sequences to the region of guide-target complementarity. The chain is Protein argonaute-3 (Ago3) from Mus musculus (Mouse).